The chain runs to 79 residues: Calcium/calmodulin-dependent protein kinase II inhibitor 2 (79 aa).

Residues 43 to 69 (KRPPKLGQIGRAKRVVIEDDRIDEVLK) are inhibitory domain.

The protein belongs to the CAMK2N family.

It is found in the nucleus. The protein localises to the cytoplasm. The protein resides in the cytosol. In terms of biological role, potent and specific cellular inhibitor of CaM-kinase II (CAMK2). Traps Ca(2+)/calmodulin on CAMK2. In Xenopus laevis (African clawed frog), this protein is Calcium/calmodulin-dependent protein kinase II inhibitor 2 (camk2n2).